Here is a 487-residue protein sequence, read N- to C-terminus: UDP-N-acetylmuramate--L-alanine ligase (487 aa).

ATP is bound at residue 122–128; that stretch reads GTHGKTS.

It belongs to the MurCDEF family.

The protein localises to the cytoplasm. The enzyme catalyses UDP-N-acetyl-alpha-D-muramate + L-alanine + ATP = UDP-N-acetyl-alpha-D-muramoyl-L-alanine + ADP + phosphate + H(+). It functions in the pathway cell wall biogenesis; peptidoglycan biosynthesis. Cell wall formation. This Corynebacterium urealyticum (strain ATCC 43042 / DSM 7109) protein is UDP-N-acetylmuramate--L-alanine ligase.